The following is a 90-amino-acid chain: Bombyxin B-3 (90 aa).

The N-terminal stretch at 1 to 20 (MMKTTIMFMLVVVISLTYSS) is a signal peptide. Intrachain disulfides connect cysteine 30-cysteine 76, cysteine 42-cysteine 89, and cysteine 75-cysteine 80. Positions 49–67 (SGAQYAPYFWTRQYLGSRG) are cleaved as a propeptide — c peptide like.

It belongs to the insulin family. In terms of assembly, heterodimer of a B chain and an A chain linked by two disulfide bonds.

The protein localises to the secreted. Functionally, brain peptide responsible for activation of prothoracic glands to produce ecdysone in insects. This chain is Bombyxin B-3 (BBXB3), found in Bombyx mori (Silk moth).